The primary structure comprises 577 residues: Polyadenylate-binding protein, cytoplasmic and nuclear (577 aa).

Residues 1–10 (MADITDKTAE) are compositionally biased toward basic and acidic residues. Positions 1–36 (MADITDKTAEQLENLNIQDDQKQAATGSESQSVENS) are disordered. Ala2 carries the N-acetylalanine modification. Lys7 is covalently cross-linked (Glycyl lysine isopeptide (Lys-Gly) (interchain with G-Cter in ubiquitin)). Residues 9 to 61 (AEQLENLNIQDDQKQAATGSESQSVENSSASLYVGDLEPSVSEAHLYDIFSPI) form a required and sufficient for nuclear export region. Positions 11-27 (QLENLNIQDDQKQAATG) are enriched in polar residues. The Nuclear export signal signature appears at 12 to 17 (LENLNI). 4 consecutive RRM domains span residues 38-116 (ASLY…WSQR), 126-203 (GNIF…PHLS), 219-296 (TNLY…RAQK), and 322-399 (VNLF…IAQR). Residue Arg107 is modified to Omega-N-methylarginine. The residue at position 249 (Ser249) is a Phosphoserine. The tract at residues 281 to 317 (DSELNGEKLYVGRAQKKNERMHVLKKQYEAYRLEKMA) is required and sufficient for nuclear import. Phosphoserine is present on Ser332. Lys337 is covalently cross-linked (Glycyl lysine isopeptide (Lys-Gly) (interchain with G-Cter in ubiquitin)). Ser405 bears the Phosphoserine mark. The interaction with SUP35 stretch occupies residues 473–577 (PPQFRNGPVY…KEQEQQTEQA (105 aa)). One can recognise a PABC domain in the interval 489-568 (GFPRNANDNN…ASAAYESFKK (80 aa)).

This sequence belongs to the polyadenylate-binding protein type-1 family. Binds to poly(A) mRNA to form a periodic structure with a packing density of one molecule per 25 adenylate residues. Interacts with the nuclear export factor CRM1 and with the importin SXM1. Interacts with RNA15, a component of the cleavage factor IA (CFIA) complex. Interacts with translation initiation factor eIF4G (TIF4631 or TIF4632) and release factor eRF3 (SUP35). Interacts with the PAB-dependent poly(A)-nuclease (PAN) complex regulatory subunit PAN3. Interacts with ARF1, DCP1, PBP1, the Hsp70 chaperone SSA1, and TPA1. Interacts with PAT1 in an RNA-dependent manner.

Its subcellular location is the cytoplasm. It localises to the nucleus. Its function is as follows. Binds the poly(A) tail of mRNA. Appears to be an important mediator of the multiple roles of the poly(A) tail in mRNA biogenesis, stability and translation. In the nucleus, interacts with the nuclear cleavage factor IA (CFIA), which is required for both mRNA cleavage and polyadenylation. Is also required for efficient mRNA export to the cytoplasm. Acts in concert with a poly(A)-specific nuclease (PAN) to affect poly(A) tail shortening, which may occur concomitantly with either nucleocytoplasmic mRNA transport or translational initiation. Regulates PAN activity via interaction with the stimulator PAN3 or the inhibitor PBP1. In the cytoplasm, affects both translation and mRNA decay. Stimulates translation by interaction with translation initiation factor eIF4G, a subunit of the cap-binding complex eIF4F, bringing the 5'- and 3'-ends of the mRNA in proximity. The formation of this circular mRNP structure appears to be critical for the synergistic effects of the cap and the poly(A) tail in facilitating translation initiation, recycling of ribosomes, and mRNA stability. Also regulates translation termination by recruiting eukaryotic release factor 3 (eRF3). Interaction with eRF3 is also required for regulation of normal mRNA decay through translation termination-coupled poly(A) shortening, probably mediated by PAN. Loss of PAB1 from the mRNP after deadenylation triggers mRNA degradation. Inhibits the major cytoplasmic mRNA deadenylase CCR4-NOT complex. Is also associated peripherally with COPI vesicles through its interaction with ARF1, and this is required for correct localization of the asymmetrically distributed ASH1 mRNA. In Saccharomyces cerevisiae (strain ATCC 204508 / S288c) (Baker's yeast), this protein is Polyadenylate-binding protein, cytoplasmic and nuclear (PAB1).